Reading from the N-terminus, the 83-residue chain is Large ribosomal subunit protein bL31B (83 aa).

The protein belongs to the bacterial ribosomal protein bL31 family. Type B subfamily. As to quaternary structure, part of the 50S ribosomal subunit.

In terms of biological role, binds the 23S rRNA. The polypeptide is Large ribosomal subunit protein bL31B (Hydrogenovibrio crunogenus (strain DSM 25203 / XCL-2) (Thiomicrospira crunogena)).